A 159-amino-acid chain; its full sequence is Transcription elongation factor GreA (159 aa).

Residues 14–76 (VKKLEEELEY…QLENMLRNAN (63 aa)) are a coiled coil.

The protein belongs to the GreA/GreB family.

In terms of biological role, necessary for efficient RNA polymerase transcription elongation past template-encoded arresting sites. The arresting sites in DNA have the property of trapping a certain fraction of elongating RNA polymerases that pass through, resulting in locked ternary complexes. Cleavage of the nascent transcript by cleavage factors such as GreA or GreB allows the resumption of elongation from the new 3'terminus. GreA releases sequences of 2 to 3 nucleotides. The chain is Transcription elongation factor GreA from Clostridium novyi (strain NT).